The chain runs to 143 residues: Cell division protein SepF (143 aa).

Belongs to the SepF family. Homodimer. Interacts with FtsZ.

The protein localises to the cytoplasm. Its function is as follows. Cell division protein that is part of the divisome complex and is recruited early to the Z-ring. Probably stimulates Z-ring formation, perhaps through the cross-linking of FtsZ protofilaments. Its function overlaps with FtsA. The sequence is that of Cell division protein SepF from Geobacillus thermodenitrificans (strain NG80-2).